A 145-amino-acid polypeptide reads, in one-letter code: D-aminoacyl-tRNA deacylase (145 aa).

The Gly-cisPro motif, important for rejection of L-amino acids motif lies at 137–138; sequence GP.

It belongs to the DTD family. Homodimer.

Its subcellular location is the cytoplasm. The catalysed reaction is glycyl-tRNA(Ala) + H2O = tRNA(Ala) + glycine + H(+). It carries out the reaction a D-aminoacyl-tRNA + H2O = a tRNA + a D-alpha-amino acid + H(+). Functionally, an aminoacyl-tRNA editing enzyme that deacylates mischarged D-aminoacyl-tRNAs. Also deacylates mischarged glycyl-tRNA(Ala), protecting cells against glycine mischarging by AlaRS. Acts via tRNA-based rather than protein-based catalysis; rejects L-amino acids rather than detecting D-amino acids in the active site. By recycling D-aminoacyl-tRNA to D-amino acids and free tRNA molecules, this enzyme counteracts the toxicity associated with the formation of D-aminoacyl-tRNA entities in vivo and helps enforce protein L-homochirality. The sequence is that of D-aminoacyl-tRNA deacylase from Salmonella typhimurium (strain LT2 / SGSC1412 / ATCC 700720).